A 378-amino-acid polypeptide reads, in one-letter code: Cytochrome b (378 aa).

The next 4 helical transmembrane spans lie at 34–54, 78–100, 113–133, and 179–199; these read FGSLLGLCLVIQILSGLFLSM, WLLRSIHANGASFFFMCLYCHIG, TWNVGVVIFFLTMGTAFVGYV, and FFSFHFLFPFMIAGLSMVHLL. Residues His-84 and His-98 each coordinate heme b. Heme b is bound by residues His-183 and His-197. Position 202 (His-202) interacts with a ubiquinone. The next 4 membrane-spanning stretches (helical) occupy residues 225–245, 289–306, 313–342, and 350–369; these read YSTKDIAGFLVFFFVFFIVVL, LGGVVSLVASIAILFCLP, KFRSLVFYPLNQILFWSFCSIFLLLTWIGM, and IFIGQILTVLYFSYFLLNPL.

Belongs to the cytochrome b family. In terms of assembly, the main subunits of complex b-c1 are: cytochrome b, cytochrome c1 and the Rieske protein. It depends on heme b as a cofactor.

Its subcellular location is the mitochondrion inner membrane. Its function is as follows. Component of the ubiquinol-cytochrome c reductase complex (complex III or cytochrome b-c1 complex) that is part of the mitochondrial respiratory chain. The b-c1 complex mediates electron transfer from ubiquinol to cytochrome c. Contributes to the generation of a proton gradient across the mitochondrial membrane that is then used for ATP synthesis. The chain is Cytochrome b (mt:Cyt-b) from Loxocorone allax (Goblet worm).